The chain runs to 1274 residues: Myosin-binding protein C, cardiac-type (1274 aa).

N-acetylmethionine is present on M1. Residues 8–95 enclose the Ig-like C2-type 1 domain; sequence PVSAFTKKPR…SKVKFDLKVT (88 aa). S47 bears the Phosphoserine mark. Over residues 95-104 the composition is skewed to basic and acidic residues; it reads TEPAPPEKAE. Positions 95 to 153 are disordered; that stretch reads TEPAPPEKAESAVAPTSMEAPETPKEVPALATQLEGNVSSPEGSVSVTQDGSVAGSQGA. T117 is subject to Phosphothreonine. The span at 128–149 shows a compositional bias: polar residues; it reads LEGNVSSPEGSVSVTQDGSVAG. An Ig-like C2-type 2 domain is found at 157–259; that stretch reads PIGLFLMRPQ…KFDSCNFNLT (103 aa). The Zn(2+) site is built by Q212, H214, E227, and H229. Phosphoserine is present on S279. T287 carries the phosphothreonine; by PKA and PKC modification. S288 is subject to Phosphoserine. A Phosphoserine; by PKA modification is found at S307. A phosphoserine mark is found at S312 and S427. Ig-like C2-type domains are found at residues 361-452 and 452-546; these read KKST…VKEP and PPVL…KKLE. C436 and C443 are oxidised to a cystine. A phosphoserine mark is found at S459 and S550. At T607 the chain carries Phosphothreonine. The Ig-like C2-type 5 domain maps to 645 to 765; that stretch reads PKIHLDCPGS…PVGEDQVNLT (121 aa). Fibronectin type-III domains follow at residues 774-870 and 872-967; these read APAA…IGPP and EPTH…VQEI. The 89-residue stretch at 971 to 1059 folds into the Ig-like C2-type 6 domain; that stretch reads PRLQLPRHLR…ENMEDKATLV (89 aa). Residues 1068-1163 form the Fibronectin type-III 3 domain; the sequence is PPLDIRVVET…TKEPIFIPRP (96 aa). The Ig-like C2-type 7 domain occupies 1181 to 1269; that stretch reads PSFTQPLTNR…GEAQCECRLE (89 aa). An Omega-N-methylarginine modification is found at R1241.

The protein belongs to the immunoglobulin superfamily. MyBP family. In terms of processing, substrate for phosphorylation by PKA and PKC. Reversible phosphorylation appears to modulate contraction. Polyubiquitinated.

In terms of biological role, thick filament-associated protein located in the crossbridge region of vertebrate striated muscle a bands. In vitro it binds MHC, F-actin and native thin filaments, and modifies the activity of actin-activated myosin ATPase. It may modulate muscle contraction or may play a more structural role. In Rattus norvegicus (Rat), this protein is Myosin-binding protein C, cardiac-type (Mybpc3).